Consider the following 152-residue polypeptide: MVWRRLPRVARNADGAVRGPLSWTFAGLVRLYRAGWSARNAGLCRFEPSCSAYALAAVRRHGGVRGGVLAVARLLRCQPLAAGGYDPVPGTDPGPGIVRRPRGATADPGGPPDGRSAGDPAVAVPPVHRHGPPSPSQGMRAEIVGSGRGPWV.

The tract at residues 81 to 152 is disordered; the sequence is AAGGYDPVPG…IVGSGRGPWV (72 aa).

It belongs to the UPF0161 family.

The protein localises to the cell membrane. Functionally, could be involved in insertion of integral membrane proteins into the membrane. The chain is Putative membrane protein insertion efficiency factor from Frankia casuarinae (strain DSM 45818 / CECT 9043 / HFP020203 / CcI3).